We begin with the raw amino-acid sequence, 417 residues long: Serine hydroxymethyltransferase (417 aa).

(6S)-5,6,7,8-tetrahydrofolate-binding positions include Leu-121 and 125–127 (GHL). Position 229 is an N6-(pyridoxal phosphate)lysine (Lys-229). Residue 355-357 (SPF) coordinates (6S)-5,6,7,8-tetrahydrofolate.

The protein belongs to the SHMT family. In terms of assembly, homodimer. It depends on pyridoxal 5'-phosphate as a cofactor.

Its subcellular location is the cytoplasm. The enzyme catalyses (6R)-5,10-methylene-5,6,7,8-tetrahydrofolate + glycine + H2O = (6S)-5,6,7,8-tetrahydrofolate + L-serine. The protein operates within one-carbon metabolism; tetrahydrofolate interconversion. Its pathway is amino-acid biosynthesis; glycine biosynthesis; glycine from L-serine: step 1/1. Its function is as follows. Catalyzes the reversible interconversion of serine and glycine with tetrahydrofolate (THF) serving as the one-carbon carrier. This reaction serves as the major source of one-carbon groups required for the biosynthesis of purines, thymidylate, methionine, and other important biomolecules. Also exhibits THF-independent aldolase activity toward beta-hydroxyamino acids, producing glycine and aldehydes, via a retro-aldol mechanism. In Xanthomonas oryzae pv. oryzae (strain MAFF 311018), this protein is Serine hydroxymethyltransferase.